A 454-amino-acid chain; its full sequence is tRNA modification GTPase MnmE (454 aa).

Arg23, Glu80, and Lys120 together coordinate (6S)-5-formyl-5,6,7,8-tetrahydrofolate. In terms of domain architecture, TrmE-type G spans 216 to 377 (GMKVVIAGRP…LRDHLKQSMG (162 aa)). K(+) is bound at residue Asn226. Residues 226 to 231 (NAGKSS), 245 to 251 (TDIAGTT), 270 to 273 (DTAG), 335 to 338 (NKAD), and 358 to 360 (SAR) each bind GTP. Position 230 (Ser230) interacts with Mg(2+). The K(+) site is built by Thr245, Ile247, and Thr250. Thr251 contacts Mg(2+). Position 454 (Lys454) interacts with (6S)-5-formyl-5,6,7,8-tetrahydrofolate.

The protein belongs to the TRAFAC class TrmE-Era-EngA-EngB-Septin-like GTPase superfamily. TrmE GTPase family. As to quaternary structure, homodimer. Heterotetramer of two MnmE and two MnmG subunits. K(+) is required as a cofactor.

The protein localises to the cytoplasm. In terms of biological role, exhibits a very high intrinsic GTPase hydrolysis rate. Involved in the addition of a carboxymethylaminomethyl (cmnm) group at the wobble position (U34) of certain tRNAs, forming tRNA-cmnm(5)s(2)U34. This Serratia proteamaculans (strain 568) protein is tRNA modification GTPase MnmE.